The chain runs to 449 residues: UDP-N-acetylmuramoyl-tripeptide--D-alanyl-D-alanine ligase (449 aa).

Residue 106–112 (GSVGKTS) participates in ATP binding.

Belongs to the MurCDEF family. MurF subfamily.

The protein resides in the cytoplasm. It catalyses the reaction D-alanyl-D-alanine + UDP-N-acetyl-alpha-D-muramoyl-L-alanyl-gamma-D-glutamyl-meso-2,6-diaminopimelate + ATP = UDP-N-acetyl-alpha-D-muramoyl-L-alanyl-gamma-D-glutamyl-meso-2,6-diaminopimeloyl-D-alanyl-D-alanine + ADP + phosphate + H(+). Its pathway is cell wall biogenesis; peptidoglycan biosynthesis. Involved in cell wall formation. Catalyzes the final step in the synthesis of UDP-N-acetylmuramoyl-pentapeptide, the precursor of murein. This chain is UDP-N-acetylmuramoyl-tripeptide--D-alanyl-D-alanine ligase, found in Rickettsia prowazekii (strain Madrid E).